The sequence spans 558 residues: Oxygen-dependent choline dehydrogenase (558 aa).

4-33 (DYIIIGAGSAGNVLATRLTEDSDTTVLLLE) is an FAD binding site. His473 (proton acceptor) is an active-site residue.

The protein belongs to the GMC oxidoreductase family. It depends on FAD as a cofactor.

The catalysed reaction is choline + A = betaine aldehyde + AH2. It carries out the reaction betaine aldehyde + NAD(+) + H2O = glycine betaine + NADH + 2 H(+). It functions in the pathway amine and polyamine biosynthesis; betaine biosynthesis via choline pathway; betaine aldehyde from choline (cytochrome c reductase route): step 1/1. In terms of biological role, involved in the biosynthesis of the osmoprotectant glycine betaine. Catalyzes the oxidation of choline to betaine aldehyde and betaine aldehyde to glycine betaine at the same rate. This Citrobacter koseri (strain ATCC BAA-895 / CDC 4225-83 / SGSC4696) protein is Oxygen-dependent choline dehydrogenase.